We begin with the raw amino-acid sequence, 416 residues long: D-amino acid dehydrogenase (416 aa).

3–17 (ITILGSGVIGVTTAY) provides a ligand contact to FAD.

This sequence belongs to the DadA oxidoreductase family. It depends on FAD as a cofactor.

The catalysed reaction is a D-alpha-amino acid + A + H2O = a 2-oxocarboxylate + AH2 + NH4(+). It participates in amino-acid degradation; D-alanine degradation; NH(3) and pyruvate from D-alanine: step 1/1. Functionally, oxidative deamination of D-amino acids. The chain is D-amino acid dehydrogenase from Brucella abortus (strain S19).